Here is a 337-residue protein sequence, read N- to C-terminus: Lipoyl synthase (337 aa).

Residues C81, C86, C92, C107, C111, C114, and S323 each coordinate [4Fe-4S] cluster. The 220-residue stretch at F93–S312 folds into the Radical SAM core domain.

This sequence belongs to the radical SAM superfamily. Lipoyl synthase family. [4Fe-4S] cluster serves as cofactor.

It localises to the cytoplasm. The catalysed reaction is [[Fe-S] cluster scaffold protein carrying a second [4Fe-4S](2+) cluster] + N(6)-octanoyl-L-lysyl-[protein] + 2 oxidized [2Fe-2S]-[ferredoxin] + 2 S-adenosyl-L-methionine + 4 H(+) = [[Fe-S] cluster scaffold protein] + N(6)-[(R)-dihydrolipoyl]-L-lysyl-[protein] + 4 Fe(3+) + 2 hydrogen sulfide + 2 5'-deoxyadenosine + 2 L-methionine + 2 reduced [2Fe-2S]-[ferredoxin]. The protein operates within protein modification; protein lipoylation via endogenous pathway; protein N(6)-(lipoyl)lysine from octanoyl-[acyl-carrier-protein]: step 2/2. Catalyzes the radical-mediated insertion of two sulfur atoms into the C-6 and C-8 positions of the octanoyl moiety bound to the lipoyl domains of lipoate-dependent enzymes, thereby converting the octanoylated domains into lipoylated derivatives. This is Lipoyl synthase from Xanthomonas oryzae pv. oryzae (strain MAFF 311018).